The chain runs to 91 residues: Defensin-like protein 82 (91 aa).

Residues 1–27 (MAIKKFSSLLLPLLMVLALVVLPIISG) form the signal peptide. 4 disulfide bridges follow: C34/C72, C41/C62, C47/C70, and C51/C71.

Belongs to the DEFL family.

It is found in the secreted. This is Defensin-like protein 82 from Arabidopsis thaliana (Mouse-ear cress).